Reading from the N-terminus, the 126-residue chain is Glycine cleavage system H protein (126 aa).

Residues 24–106 (TVTVGITDHA…YGEGWMYRIK (83 aa)) form the Lipoyl-binding domain. Position 65 is an N6-lipoyllysine (lysine 65).

Belongs to the GcvH family. In terms of assembly, the glycine cleavage system is composed of four proteins: P, T, L and H. The cofactor is (R)-lipoate.

The glycine cleavage system catalyzes the degradation of glycine. The H protein shuttles the methylamine group of glycine from the P protein to the T protein. This chain is Glycine cleavage system H protein, found in Psychrobacter sp. (strain PRwf-1).